Reading from the N-terminus, the 105-residue chain is UPF0145 protein (105 aa).

The protein belongs to the UPF0145 family.

In Enterococcus faecalis (Streptococcus faecalis), this protein is UPF0145 protein.